The primary structure comprises 844 residues: MAPTFQTALFFTIISLSFAAPNAKQVRWCAISDLEQKKCNDLVGSCNVPDITLVCVLRSSTEDCMTAIKDGQADAMFLDSGEVYEASKDPYNLKPIIAEPYSSNRDLQKCLKERQQALAKKMIGHYIPQCDEKGNYQPQQCHGSTGHCWCVNAMGEKISGTNTPPGQTRATCERHELPKCLKERQVALGGDEKVLGRFVPQCDEKGNYEPQQFHGSTGYSWCVNAIGEEIAGTKTPPGKIPATCQKHDLVTTCHYAVAMVKKSSAFQFNQLKGKRSCHSGVSKTDGWKALVTVLVEKKLLSWDGPAKESIQRAMSKFFSVSCIPGATQTNLCKQCKGEEGKNCKNSHDEPYYGNYGAFRCLKEDMGDVAFLRSTALSDEHSEVYELLCPDNTRKPLNKYKECNLGTVPAGTVVTRKISDKTEDINNFLMEAQKRQCKLFSSAHGKDLMFDDSTLQLALLSSEVDAFLYLGVKLFHAMKALTGDAHLPSKNKVRWCTINKLEKMKCDDWSAVSGGAIACTEASCPKGCVKQILKGEADAVKLEVQYMYEALMCGLLPAVEEYHNKDDFGPCKTPGSPYTDFGTLRAVALVKKSNKDINWNNIKGKKSCHTGVGDIAGWVIPVSLIRRQNDNSDIDSFFGESCAPGSDTKSNLCKLCIGDPKNSAANTKCSLSDKEAYYGNQGAFRCLVEKGDVAFVPHTVVFENTDGKNPAVWAKNLKSEDFELLCLDGSRAPVSNYKSCKLSGIPPPAIVTREESISDVVRIVANQQSLYGRKGFEKDMFQLFSSNKGNNLLFNDNTQCLITFDRQPKDIMEDYFGKPYYTTVYGASRSAMSSELISACTIKHC.

Positions 1–19 (MAPTFQTALFFTIISLSFA) are cleaved as a signal peptide. Positions 26–106 (VRWCAISDLE…IAEPYSSNRD (81 aa)) constitute a Transferrin-like 1; first part domain. Cystine bridges form between C29-C64, C39-C55, C110-C130, C141-C148, C150-C172, C180-C202, C222-C244, C277-C360, C322-C335, C332-C343, C388-C402, C495-C527, C505-C518, C552-C839, C570-C799, C607-C685, C641-C655, C652-C668, and C725-C739. 2 Thyroglobulin type-1 domains span residues 107 to 172 (LQKC…RATC) and 177 to 244 (LPKC…PATC). The interval 109 to 249 (KCLKERQQAL…IPATCQKHDL (141 aa)) is absent in transferrins. The region spanning 245-482 (QKHDLVTTCH…LFHAMKALTG (238 aa)) is the Transferrin-like 1; second part domain. The Transferrin-like 2 domain maps to 492–828 (VRWCTINKLE…YYTTVYGASR (337 aa)).

Belongs to the transferrin family. As to quaternary structure, monomer. Plasma. Highest levels of transcripts found in the liver, the lung, the pancreas and the brain.

Its subcellular location is the secreted. Its function is as follows. Binds specifically to the neurotoxin saxitoxin. Its physiological role may be to transport or sequester an endogenous organic molecule other than Fe(3+). It may participate in a detoxification mechanism for neutralizing a microbial toxin. The chain is Saxiphilin from Aquarana catesbeiana (American bullfrog).